The chain runs to 493 residues: Aerolysin (493 aa).

The N-terminal stretch at 1-23 (MQKIKLTGLSLIISGLLMAQAQA) is a signal peptide. Disulfide bonds link Cys42-Cys98 and Cys182-Cys187. The segment at 68 to 84 (WQISGLANGWVIMGPGY) is interaction with host N-linked glycan. Residues 256–288 (YGLSEKVTTKNKFKWPLVGETELSIEIAANQSW) are part of the transmembrane beta-barrel after proteolytic activation of the toxin and insertion into the host membrane. The interval 346-355 (RWGGNAWYTH) is interaction with glycans from host GPI-anchor. The propeptide occupies 446 to 493 (AADSKVRRARSVDGAGQGLRLEIPLDAQELSGLGFNNVSLSVTPAANQ).

The protein belongs to the aerolysin family. Homodimer in solution; homoheptamer in the host membrane. After binding to GPI-anchored proteins in target membranes and proteolytic removal of the C-terminal propeptide, the protein assembles into a heptameric pre-pore complex. A further conformation change leads to insertion into the host membrane. Post-translationally, proteolytic cleavage and subsequent release of the propeptide trigger a major conformation change, leading to the formation of a heptameric pre-pore that then inserts into the host membrane.

The protein resides in the secreted. It localises to the host cell membrane. Secreted, cytolytic toxin that forms pores in host membranes after proteolytic removal of a C-terminal propeptide, leading to destruction of the membrane permeability barrier and host cell death. The pores are formed by transmembrane beta-strands and are approximately 3 nm in diameter. This is Aerolysin (aerA) from Aeromonas hydrophila.